The primary structure comprises 206 residues: Small ribosomal subunit protein uS4 (206 aa).

The S4 RNA-binding domain occupies 96-160 (CRLDNVVYRM…AQLRIVQALE (65 aa)).

The protein belongs to the universal ribosomal protein uS4 family. Part of the 30S ribosomal subunit. Contacts protein S5. The interaction surface between S4 and S5 is involved in control of translational fidelity.

Its function is as follows. One of the primary rRNA binding proteins, it binds directly to 16S rRNA where it nucleates assembly of the body of the 30S subunit. In terms of biological role, with S5 and S12 plays an important role in translational accuracy. In Pseudomonas putida (strain GB-1), this protein is Small ribosomal subunit protein uS4.